The chain runs to 693 residues: MTSLQQQRVKYGPPHHIKRRPYHPILESLEFQTNQHLIQEYSLDIVNTLSQLESLTLVNPAMIDLQPEIQWFMRPFLLDFLIELHSSFKLQPTTLFLCLNIIDRYCAKRIVFKRHYQLVGCTALWIASKYEDKKSRVPTLKELTIMCRNAYDEEMFVQMEMHILSTLDWSIGHPTLEDCLQLAIDSNNLSNNTTNDIENKSVRPNRKSSISSAVTAVARFLCELSLYDKYFLSVPPSLIAITANLLSCSMLQIPHASITLKNLIEQEIINPQQKKQKKALSSNSSRTTTASYTHQNQSDVRHSSFDEDIDLDSGDEEDDDEDYIDEFYETNNYDDTNATTFDESISKSTTVNDENQPPQIHTPFLSGLDEDSILSIKKICLMLIIQLSKVTEVLSKKYENLGVIQVINNFHSNYKFIIQSIYENQELLLNTINDSTNNNEIDYKLIQSSEILLQFPKFDEYLTEDEDENVSTDDEANSQPQGYDGSGSDGNNQLFTPKSPNAFSSNSSLTLNNHPQSMVPVTPPSATSQYSLFSNKNNRTHESTSGLNSTCNTPTHISISSFAPPQPPPGSILKPKLTSINSTNSLKIKKLTSNSNSSNINIHHGHHNTKQEKRYSHISIGSNSSSKYDGFSPIKSISTNGSLITNNGSLITNNGSFTNIVNNTNSSSPLMNQQQQQQVTQSSLYQHHHQYHQ.

Polar residues predominate over residues 273 to 298 (QKKQKKALSSNSSRTTTASYTHQNQS). Disordered stretches follow at residues 273–320 (QKKQ…EDDD), 465–571 (DEDE…PPGS), 595–615 (SNSS…EKRY), and 662–693 (NNTN…QYHQ). Composition is skewed to acidic residues over residues 306–320 (DEDI…EDDD) and 465–476 (DEDENVSTDDEA). Polar residues-rich tracts occupy residues 489-516 (DGNN…NHPQ) and 524-563 (PSAT…SSFA). Positions 666–685 (SSSPLMNQQQQQQVTQSSLY) are enriched in low complexity.

It belongs to the cyclin family. In terms of assembly, interacts with CDC28. The CDC28-CCN1 complex associates with septin CDC11 upon hyphal induction.

G1/S-specific cyclin essential for the control of the cell cycle at the G1/S (start) transition and for maintenance of filamentous growth. Through binding to CDC28 controls the phosphorylation of CDC11 and SEC2 upon induction of filamentous growth. This chain is G1/S-specific cyclin CCN1 (CCN1), found in Candida albicans (strain SC5314 / ATCC MYA-2876) (Yeast).